The primary structure comprises 91 residues: UPF0223 protein SACOL1106 (91 aa).

It belongs to the UPF0223 family.

The chain is UPF0223 protein SACOL1106 from Staphylococcus aureus (strain COL).